The following is a 632-amino-acid chain: Deoxynucleoside triphosphate triphosphohydrolase SAMHD1 (632 aa).

The disordered stretch occupies residues 1–22 (MKGINGAKRVRHDASPSAQDGY). An SAM domain is found at 44–107 (WDVEEVCLFL…LSCLRMLCQN (64 aa)). Residues K113 and V114 each coordinate GTP. DGTP is bound at residue N116. Residues D134, Q139, and R142 each contribute to the GTP site. The dGTP site is built by Q146, L147, V153, and R161. Q146 is a binding site for dATP. DCTP is bound at residue Q146. A dTTP-binding site is contributed by Q146. R161 serves as a coordination point for dATP. Residue R161 participates in dCTP binding. R161 provides a ligand contact to dTTP. Residues 161-321 (RFEHSIGVGY…GIDVDKWDYF (161 aa)) form the HD domain. Residues H164, H203, and D204 each contribute to the Mn(2+) site. Residues H207 and H212 each contribute to the dATP site. 2 residues coordinate dCTP: H207 and H212. The dTTP site is built by H207 and H212. The active site involves H230. Position 316 (D316) interacts with Mn(2+). DGTP contacts are provided by K317, Y320, D324, R338, R357, K359, N363, R371, Y379, Q380, H381, and K382. Positions 317, 320, and 324 each coordinate dATP. 3 residues coordinate dCTP: K317, Y320, and D324. K317, Y320, and D324 together coordinate dTTP. Residue R371 coordinates dATP. R371 provides a ligand contact to dCTP. Q380 is a binding site for dATP. DCTP is bound at residue Q380. A dTTP-binding site is contributed by Q380. GTP contacts are provided by R456, K460, and K529. A dGTP-binding site is contributed by K529.

It belongs to the SAMHD1 family. Homodimer; in absence of GTP and dNTP. Homotetramer; in GTP- and dNTP-bound form. Interacts with rbbp8/CtIP. Requires Zn(2+) as cofactor.

It is found in the nucleus. Its subcellular location is the chromosome. It carries out the reaction a 2'-deoxyribonucleoside 5'-triphosphate + H2O = a 2'-deoxyribonucleoside + triphosphate + H(+). It catalyses the reaction dATP + H2O = 2'-deoxyadenosine + triphosphate + H(+). The enzyme catalyses dCTP + H2O = 2'-deoxycytidine + triphosphate + H(+). The catalysed reaction is dGTP + H2O = 2'-deoxyguanosine + triphosphate + H(+). It carries out the reaction dTTP + H2O = thymidine + triphosphate + H(+). Allosterically activated and regulated via the combined actions of GTP and dNTPs (dATP, dGTP, dTTP and dCTP): Allosteric site 1 binds GTP, while allosteric site 2 binds dNTP. Allosteric activation promotes the formation of highly active homotetramers. Functionally, protein that acts both as a host restriction factor involved in defense response to virus and as a regulator of DNA end resection at stalled replication forks. Has deoxynucleoside triphosphate (dNTPase) activity, which is required to restrict infection by viruses: dNTPase activity reduces cellular dNTP levels to levels too low for retroviral reverse transcription to occur, blocking early-stage virus replication in dendritic and other myeloid cells. Functions during S phase at stalled DNA replication forks to promote the resection of gapped or reversed forks: acts by stimulating the exonuclease activity of mre11, activating the ATR-CHK1 pathway and allowing the forks to restart replication. Ability to promote DNA end resection at stalled replication forks is independent of dNTPase activity. This is Deoxynucleoside triphosphate triphosphohydrolase SAMHD1 from Xenopus laevis (African clawed frog).